Consider the following 182-residue polypeptide: Large ribosomal subunit protein uL5 (182 aa).

In terms of assembly, part of the 50S ribosomal subunit; part of the 5S rRNA/uL5/uL18/bL25 (TL7) subcomplex; has also been isolated as a complex with 5S rRNA, bL25 (TL7) and DNA binding protein II. Forms a bridge to the 30S subunit in the 70S ribosome, contacting protein uS13; this bridge is straddled by the 5S rRNA. Contacts the P site tRNA.

In terms of biological role, this is one of the proteins that bind and probably mediate the attachment of the 5S RNA into the large ribosomal subunit, where it forms part of the central protuberance. In the 70S ribosome it contacts protein S13 of the 30S subunit (forming bridge B1b) connecting the head of the 30S subunit to the top of the 50S subunit. The bridge itself contacts the P site tRNA and is implicated in movement during ribosome translocation. Also contacts the P site tRNA independently of the intersubunit bridge; the 5S rRNA and some of its associated proteins might help stabilize positioning of ribosome-bound tRNAs. In Thermus thermophilus (strain ATCC 27634 / DSM 579 / HB8), this protein is Large ribosomal subunit protein uL5 (rplE).